The sequence spans 371 residues: Protein-tyrosine sulfotransferase 2 (371 aa).

At 1-8 (MRVTMRRV) the chain is on the cytoplasmic side. A helical; Signal-anchor for type II membrane protein transmembrane segment spans residues 9–25 (LLAVGSVVALMVTLHLG). Over 26–371 (QQVLECQHVL…QVTQNTSSSH (346 aa)) the chain is Lumenal. Residue 76–80 (RSGTT) coordinates 3'-phosphoadenylyl sulfate. A disulfide bridge links Cys94 with Cys154. Residue Glu97 is the Proton donor/acceptor of the active site. Residues 99–103 (RIIPR) are interaction with peptide substrate. Positions 181, 189, and 193 each coordinate 3'-phosphoadenylyl sulfate. Cys223 and Cys231 are oxidised to a cystine. Residues Tyr236, 283 to 292 (STDQVIKPVN), and Lys298 contribute to the 3'-phosphoadenylyl sulfate site. N-linked (GlcNAc...) asparagine glycans are attached at residues Asn341 and Asn366.

Belongs to the protein sulfotransferase family.

It localises to the golgi apparatus membrane. The catalysed reaction is L-tyrosyl-[protein] + 3'-phosphoadenylyl sulfate = O-sulfo-L-tyrosine-[protein] + adenosine 3',5'-bisphosphate + H(+). Its function is as follows. Catalyzes the O-sulfation of tyrosine residues within acidic motifs of polypeptides, using 3'-phosphoadenylyl sulfate (PAPS) as cosubstrate. In Gallus gallus (Chicken), this protein is Protein-tyrosine sulfotransferase 2 (TPST2).